A 156-amino-acid polypeptide reads, in one-letter code: Ribosomal RNA large subunit methyltransferase H (156 aa).

S-adenosyl-L-methionine is bound by residues leucine 73, glycine 104, and 123 to 128; that span reads LSALTL.

This sequence belongs to the RNA methyltransferase RlmH family. In terms of assembly, homodimer.

It is found in the cytoplasm. The catalysed reaction is pseudouridine(1915) in 23S rRNA + S-adenosyl-L-methionine = N(3)-methylpseudouridine(1915) in 23S rRNA + S-adenosyl-L-homocysteine + H(+). In terms of biological role, specifically methylates the pseudouridine at position 1915 (m3Psi1915) in 23S rRNA. The polypeptide is Ribosomal RNA large subunit methyltransferase H (Shewanella baltica (strain OS223)).